We begin with the raw amino-acid sequence, 356 residues long: UDP-N-acetylglucosamine--N-acetylmuramyl-(pentapeptide) pyrophosphoryl-undecaprenol N-acetylglucosamine transferase (356 aa).

Residues threonine 12 to glycine 14, asparagine 124, arginine 163, serine 188, isoleucine 242, and glutamine 287 contribute to the UDP-N-acetyl-alpha-D-glucosamine site.

The protein belongs to the glycosyltransferase 28 family. MurG subfamily.

The protein localises to the cell inner membrane. The catalysed reaction is di-trans,octa-cis-undecaprenyl diphospho-N-acetyl-alpha-D-muramoyl-L-alanyl-D-glutamyl-meso-2,6-diaminopimeloyl-D-alanyl-D-alanine + UDP-N-acetyl-alpha-D-glucosamine = di-trans,octa-cis-undecaprenyl diphospho-[N-acetyl-alpha-D-glucosaminyl-(1-&gt;4)]-N-acetyl-alpha-D-muramoyl-L-alanyl-D-glutamyl-meso-2,6-diaminopimeloyl-D-alanyl-D-alanine + UDP + H(+). It functions in the pathway cell wall biogenesis; peptidoglycan biosynthesis. Cell wall formation. Catalyzes the transfer of a GlcNAc subunit on undecaprenyl-pyrophosphoryl-MurNAc-pentapeptide (lipid intermediate I) to form undecaprenyl-pyrophosphoryl-MurNAc-(pentapeptide)GlcNAc (lipid intermediate II). The polypeptide is UDP-N-acetylglucosamine--N-acetylmuramyl-(pentapeptide) pyrophosphoryl-undecaprenol N-acetylglucosamine transferase (Pseudomonas syringae pv. syringae (strain B728a)).